The primary structure comprises 412 residues: uncharacterized protein (412 aa).

Positions 62, 68, 71, and 143 each coordinate [4Fe-4S] cluster. Residues Q243, F270, E290, and D338 each contribute to the S-adenosyl-L-methionine site. The Nucleophile role is filled by C364.

It belongs to the class I-like SAM-binding methyltransferase superfamily. RNA M5U methyltransferase family.

This is an uncharacterized protein from Mesorhizobium japonicum (strain LMG 29417 / CECT 9101 / MAFF 303099) (Mesorhizobium loti (strain MAFF 303099)).